An 822-amino-acid polypeptide reads, in one-letter code: General transcription factor 3C polypeptide 4 (822 aa).

An N-acetylmethionine modification is found at M1. Residues 1-41 form a disordered region; sequence MNTADQARVGPADDGPAPSGEEEGEGGGEAGGKEPAADAAP. A Phosphoserine modification is found at S19. A Glycyl lysine isopeptide (Lys-Gly) (interchain with G-Cter in SUMO2) cross-link involves residue K225. A phosphoserine mark is found at S604 and S611. The disordered stretch occupies residues 608-663; that stretch reads LVDSPGMGNADDEQQEEGTSSKQVVKQGLQERSKEGDVEEPTDDSLPTTGDAGGRE. A Glycyl lysine isopeptide (Lys-Gly) (interchain with G-Cter in SUMO2) cross-link involves residue K629. S652 is subject to Phosphoserine.

This sequence belongs to the TFIIIC subunit 4 family. Part of the TFIIIC subcomplex TFIIIC2, consisting of six subunits, GTF3C1, GTF3C2, GTF3C3, GTF3C4, GTF3C5 and GTF3C6. Interacts with BRF1, GTF3C1, GTF3C2, GTF3C5, GTF3C6, POLR3C and POLR3F.

It localises to the nucleus. It catalyses the reaction L-lysyl-[protein] + acetyl-CoA = N(6)-acetyl-L-lysyl-[protein] + CoA + H(+). Functionally, essential for RNA polymerase III to make a number of small nuclear and cytoplasmic RNAs, including 5S RNA, tRNA, and adenovirus-associated (VA) RNA of both cellular and viral origin. Has histone acetyltransferase activity (HAT) with unique specificity for free and nucleosomal H3. May cooperate with GTF3C5 in facilitating the recruitment of TFIIIB and RNA polymerase through direct interactions with BRF1, POLR3C and POLR3F. May be localized close to the A box. This Homo sapiens (Human) protein is General transcription factor 3C polypeptide 4 (GTF3C4).